Reading from the N-terminus, the 469-residue chain is Transcription factor phomD (469 aa).

A DNA-binding region (zn(2)-C6 fungal-type) is located at residues 14–41 (CNACNESKVRCSQRKPTCARCERNGVEC). Residues 49-118 (THKDAPPISM…QQKEEAAAAA (70 aa)) are disordered. The span at 82-93 (KANSNSSSNWHM) shows a compositional bias: polar residues. The span at 104–118 (QQQQQQQKEEAAAAA) shows a compositional bias: low complexity.

Its subcellular location is the nucleus. Transcription factor; part of the gene cluster that mediates the biosynthesis of the phomopsins, a group of hexapeptide mycotoxins which infects lupins and causes lupinosis disease in livestock. May play a role in the regulation of the production of phomopsins. The polypeptide is Transcription factor phomD (Diaporthe leptostromiformis (Lupinosis disease fungus)).